The chain runs to 408 residues: Elongation factor Tu (408 aa).

The region spanning 10–219 is the tr-type G domain; it reads KTHVNVGTIG…ALDTYIPDPV (210 aa). GTP-binding positions include 19-26, 88-92, and 143-146; these read GHVDHGKT, DCPGH, and NKCD. Residue Thr-26 coordinates Mg(2+).

It belongs to the TRAFAC class translation factor GTPase superfamily. Classic translation factor GTPase family. EF-Tu/EF-1A subfamily. In terms of assembly, monomer.

It is found in the cytoplasm. The enzyme catalyses GTP + H2O = GDP + phosphate + H(+). Functionally, GTP hydrolase that promotes the GTP-dependent binding of aminoacyl-tRNA to the A-site of ribosomes during protein biosynthesis. In Brachyspira hyodysenteriae (strain ATCC 49526 / WA1), this protein is Elongation factor Tu.